A 452-amino-acid chain; its full sequence is MELVKLNRSVQGSGPVASLCRPGGPLLNNSGTGNLSCEPPRIRGAGTRELELAIRVTLYAVIFLMSVGGNILIIVVLGLSRRLRTVTNAFLLSLAVSDLLLAVACMPFTLLPNLMGTFIFGTVICKAVSYLMGVSVSVSTLSLVAIALERYSAICRPLQARVWQTRSHAARVILATWLLSGLLMVPYPVYTAVQPVGPRVLQCVHRWPSARVRQTWSVLLLLLLFFVPGVVMAVAYGLISRELYLGLRFDSDSDSESQSRVRGQGGLPGGAAPGPVHQNGRCRPEAGLAGEDGDGCYVQLPRSRPALELSALTAPISGPGPGPRPAQAKLLAKKRVVRMLLVIVVLFFMCWLPVYSANTWRAFDGPGAHRALSGAPISFIHLLSYASACVNPLVYCFMHRRFRQACLDTCARCCPRPPRARPRPLPDEDPPTPSIASLSRLSYTTISTLGPG.

Residues 1-55 lie on the Extracellular side of the membrane; sequence MELVKLNRSVQGSGPVASLCRPGGPLLNNSGTGNLSCEPPRIRGAGTRELELAIR. Asn-7, Asn-28, and Asn-34 each carry an N-linked (GlcNAc...) asparagine glycan. The helical transmembrane segment at 56 to 77 threads the bilayer; sequence VTLYAVIFLMSVGGNILIIVVL. Over 78–85 the chain is Cytoplasmic; that stretch reads GLSRRLRT. Residues 86–107 form a helical membrane-spanning segment; it reads VTNAFLLSLAVSDLLLAVACMP. At 108-129 the chain is on the extracellular side; the sequence is FTLLPNLMGTFIFGTVICKAVS. A disulfide bond links Cys-125 and Cys-203. A helical transmembrane segment spans residues 130 to 148; the sequence is YLMGVSVSVSTLSLVAIAL. The Cytoplasmic segment spans residues 149-168; it reads ERYSAICRPLQARVWQTRSH. The helical transmembrane segment at 169–187 threads the bilayer; that stretch reads AARVILATWLLSGLLMVPY. The Extracellular segment spans residues 188 to 217; sequence PVYTAVQPVGPRVLQCVHRWPSARVRQTWS. A helical membrane pass occupies residues 218-240; the sequence is VLLLLLLFFVPGVVMAVAYGLIS. The Cytoplasmic segment spans residues 241–338; it reads RELYLGLRFD…KLLAKKRVVR (98 aa). The segment at 255 to 285 is disordered; sequence SESQSRVRGQGGLPGGAAPGPVHQNGRCRPE. Over residues 263 to 272 the composition is skewed to gly residues; that stretch reads GQGGLPGGAA. A helical membrane pass occupies residues 339–360; it reads MLLVIVVLFFMCWLPVYSANTW. The Extracellular portion of the chain corresponds to 361-378; it reads RAFDGPGAHRALSGAPIS. A helical transmembrane segment spans residues 379–399; the sequence is FIHLLSYASACVNPLVYCFMH. At 400-452 the chain is on the cytoplasmic side; sequence RRFRQACLDTCARCCPRPPRARPRPLPDEDPPTPSIASLSRLSYTTISTLGPG. The S-palmitoyl cysteine moiety is linked to residue Cys-413.

Belongs to the G-protein coupled receptor 1 family.

The protein resides in the cell membrane. In terms of biological role, receptor for gastrin and cholecystokinin. The CCK-B receptors occur throughout the central nervous system where they modulate anxiety, analgesia, arousal, and neuroleptic activity. This receptor mediates its action by association with G proteins that activate a phosphatidylinositol-calcium second messenger system. The chain is Gastrin/cholecystokinin type B receptor (CCKBR) from Oryctolagus cuniculus (Rabbit).